The sequence spans 303 residues: Probable 5-dehydro-4-deoxyglucarate dehydratase (303 aa).

This sequence belongs to the DapA family.

The enzyme catalyses 5-dehydro-4-deoxy-D-glucarate + H(+) = 2,5-dioxopentanoate + CO2 + H2O. The protein operates within carbohydrate acid metabolism; D-glucarate degradation; 2,5-dioxopentanoate from D-glucarate: step 2/2. The chain is Probable 5-dehydro-4-deoxyglucarate dehydratase from Agrobacterium fabrum (strain C58 / ATCC 33970) (Agrobacterium tumefaciens (strain C58)).